Consider the following 213-residue polypeptide: Uridine kinase (213 aa).

15-22 serves as a coordination point for ATP; that stretch reads GASASGKS.

The protein belongs to the uridine kinase family.

Its subcellular location is the cytoplasm. It catalyses the reaction uridine + ATP = UMP + ADP + H(+). The enzyme catalyses cytidine + ATP = CMP + ADP + H(+). It participates in pyrimidine metabolism; CTP biosynthesis via salvage pathway; CTP from cytidine: step 1/3. The protein operates within pyrimidine metabolism; UMP biosynthesis via salvage pathway; UMP from uridine: step 1/1. This chain is Uridine kinase, found in Enterobacter sp. (strain 638).